The sequence spans 1140 residues: DNA damage-binding protein 1 (1140 aa).

N-acetylserine is present on Ser2. Residues 2-768 (SYNYVVTAQK…QALSSSVSSS (767 aa)) form an interaction with CDT1 region. Positions 13-356 (TAVNGCVTGH…VVAMETFTNL (344 aa)) are WD repeat beta-propeller A. Residues 392-708 (NGIGIHEHAS…LTIGTIDEIQ (317 aa)) form a WD repeat beta-propeller B; Interaction with CUL4A region. The WD repeat beta-propeller C stretch occupies residues 709–1043 (KLHIRTVPLY…NGMIGLVTSL (335 aa)). The interaction with CDT1 and CUL4A stretch occupies residues 771–1140 (FSSSTAPHET…KVVEELTRIH (370 aa)). An N6-acetyllysine modification is found at Lys1067. Residue Lys1121 forms a Glycyl lysine isopeptide (Lys-Gly) (interchain with G-Cter in SUMO2) linkage. Position 1125 is a phosphothreonine (Thr1125).

The protein belongs to the DDB1 family. Component of the UV-DDB complex which includes DDB1 and DDB2; the heterodimer dimerizes to give rise to a heterotetramer when bound to damaged DNA. The UV-DDB complex interacts with monoubiquitinated histone H2A and binds to XPC via the DDB2 subunit. Component of numerous DCX (DDB1-CUL4-X-box) E3 ubiquitin-protein ligase complexes which consist of a core of DDB1, CUL4A or CUL4B and RBX1. DDB1 may recruit specific substrate targeting subunits to the DCX complex. These substrate targeting subunits are generally known as DCAF (DDB1- and CUL4-associated factor) or CDW (CUL4-DDB1-associated WD40-repeat) proteins. Interacts with AMBRA1, ATG16L1, BTRC, CRBN, DCAF1, DCAF4, DCAF5, DCAF6, DCAF7, DCAF8, DCAF9, DCAF10, DCAF11, DCAF12, DCAF15, DCAF16, DCAF17, DDA1, DET1, DTL, ERCC8, FBXW5, FBXW8, GRWD1, KATNB1, NLE1, NUP43, PAFAH1B1, PHIP, PWP1, RBBP4, RBBP5, RBBP7, COP1, SNRNP40, DCAF1, WDR5, WDR5B, WDR12, WDR26, WDR39, WDR42, WDR53, WDR59, WDR61, WSB1, WSB2, LRWD1 and WDTC1. DCX complexes may associate with the COP9 signalosome, and this inhibits the E3 ubiquitin-protein ligase activity of the complex. Interacts with NF2, TSC1 and TSC2. Interacts with AGO1 and AGO2. Associates with the E3 ligase complex containing DYRK2, EDD/UBR5, DDB1 and DCAF1 proteins (EDVP complex). Interacts directly with DYRK2. DCX(DTL) complex interacts with FBXO11; does not ubiquitinate and degradate FBXO11. Interacts with TRPC4AP. Interacts with CRY1 and CRY2. The DDB1-CUL4A complex interacts with CRY1. May also interact with DCUN1D1, DCUN1D2, DCUN1D3 and DCUN1D5. Component of the DCX(DCAF13) E3 ubiquitin ligase complex, at least composed of CUL4 (CUL4A or CUL4B), DDB1, DCAF13 and RBX1. Interacts with DCAF13 (via WD40 domain). In terms of assembly, (Microbial infection) Interacts with Simian virus 5 protein V. As to quaternary structure, (Microbial infection) Interacts with hepatitis B virus protein HBX; the viral protein contains a short helical motif that competes for the same binding site as the N-terminal helical motif found in endogenous DCAF proteins. (Microbial infection) Interacts with human cytomegalovirus protein UL145; this interaction promotes STAT2 degradation. In terms of assembly, (Microbial infection) Interacts with human cytomegalovirus protein RL1; this interaction allows RL1 to recruit the cullin4-RING E3 ubiquitin ligase (CRL4) complex and promote SLN11 degradation. In terms of processing, phosphorylated by ABL1. Ubiquitinated by CUL4A. Subsequently degraded by ubiquitin-dependent proteolysis. Post-translationally, acetylated, promoting interaction with CUL4 (CUL4A or CUL4B) and subsequent formation of DCX (DDB1-CUL4-X-box) E3 ubiquitin-protein ligase complexes. Deacetylation by SIRT7 impairs the interaction with CUL4 (CUL4A or CUL4B) and formation of DCX (DDB1-CUL4-X-box) E3 ubiquitin-protein ligase complexes.

The protein localises to the cytoplasm. Its subcellular location is the nucleus. It functions in the pathway protein modification; protein ubiquitination. Functionally, protein, which is both involved in DNA repair and protein ubiquitination, as part of the UV-DDB complex and DCX (DDB1-CUL4-X-box) complexes, respectively. Core component of the UV-DDB complex (UV-damaged DNA-binding protein complex), a complex that recognizes UV-induced DNA damage and recruit proteins of the nucleotide excision repair pathway (the NER pathway) to initiate DNA repair. The UV-DDB complex preferentially binds to cyclobutane pyrimidine dimers (CPD), 6-4 photoproducts (6-4 PP), apurinic sites and short mismatches. Also functions as a component of numerous distinct DCX (DDB1-CUL4-X-box) E3 ubiquitin-protein ligase complexes which mediate the ubiquitination and subsequent proteasomal degradation of target proteins. The functional specificity of the DCX E3 ubiquitin-protein ligase complex is determined by the variable substrate recognition component recruited by DDB1. DCX(DDB2) (also known as DDB1-CUL4-ROC1, CUL4-DDB-ROC1 and CUL4-DDB-RBX1) may ubiquitinate histone H2A, histone H3 and histone H4 at sites of UV-induced DNA damage. The ubiquitination of histones may facilitate their removal from the nucleosome and promote subsequent DNA repair. DCX(DDB2) also ubiquitinates XPC, which may enhance DNA-binding by XPC and promote NER. DCX(DTL) plays a role in PCNA-dependent polyubiquitination of CDT1 and MDM2-dependent ubiquitination of TP53 in response to radiation-induced DNA damage and during DNA replication. DCX(ERCC8) (the CSA complex) plays a role in transcription-coupled repair (TCR). The DDB1-CUL4A-DTL E3 ligase complex regulates the circadian clock function by mediating the ubiquitination and degradation of CRY1. DDB1-mediated CRY1 degradation promotes FOXO1 protein stability and FOXO1-mediated gluconeogenesis in the liver. By acting on TET dioxygenses, essential for oocyte maintenance at the primordial follicle stage, hence essential for female fertility. Maternal factor required for proper zygotic genome activation and genome reprogramming. This Homo sapiens (Human) protein is DNA damage-binding protein 1 (DDB1).